The following is a 132-amino-acid chain: Fatty acid-binding protein type 2 (132 aa).

At alanine 2 the chain carries N-acetylalanine.

This sequence belongs to the calycin superfamily. Fatty-acid binding protein (FABP) family.

This is Fatty acid-binding protein type 2 from Fasciola hepatica (Liver fluke).